We begin with the raw amino-acid sequence, 636 residues long: MSKIRSSATMPHRDQPSPASPHVVTLNCIEDCALEQDSLAGVAGVEYVPLSRIADGKIESATAVLLHSLAYLPRAAQRRLRPHQLILCLGSADRAVDSTLAADLGLRLVHVDTSRAEEIADTVMALILGLLRRTHLLSRHALSASGWLGSLQPLCRGMRRCRGMVLGIVGRSVSARYLASRSLAFKMSVLYFDVPEGDEERIRPSRFPRAARRMDTLNDLLAASDVISLHCALTNDTVQILNAECLQHIKPGAFLVNTGSCQLLDDCAVKQLLIDGTIAGCALDGAEGPQWMEAWVKEMPNVLILPRSADYSEEVWMEIREKAISILHSFFLDGVIPSNTVSDEEVEESEASEEEEQSPSKHEKLAIVESTSRQQGESTLTSTEIVRREASELKESLSPGQQHVSQNTAVKPEGRRSRSGKKAKKRHSQQKYMQKTDGSSGLNEESTSRRDDIAMSDTEEVLSSSSRCASPEDSRSRKTPLEVMQESSPNQLVMSSKKFIGKSSELLKDGYVVALYAKDLSGLHVSRQRTKNGGWFLDTLSNVSKRDPAAQFIIAYRNKDTVGLRSFAAGGKLLQINRRMEFVFASHSFDVWESWSLEGSLDECRLVNCRNSSAVLDVRVEILAMVGDDGITRWID.

The interval 1-21 (MSKIRSSATMPHRDQPSPASP) is disordered. Residues S91, 147–148 (WL), 169–174 (VGRSVS), D193, 231–237 (CALTNDT), 258–260 (TGS), D284, and 307–311 (RSADY) each bind NAD(+). Residues 341–489 (VSDEEVEESE…PLEVMQESSP (149 aa)) form a disordered region. Acidic residues predominate over residues 342 to 357 (SDEEVEESEASEEEEQ). A compositionally biased stretch (polar residues) spans 369–384 (ESTSRQQGESTLTSTE). Residues 385 to 395 (IVRREASELKE) show a composition bias toward basic and acidic residues. Over residues 398-409 (SPGQQHVSQNTA) the composition is skewed to polar residues. The segment covering 417 to 429 (SRSGKKAKKRHSQ) has biased composition (basic residues). Positions 430-445 (QKYMQKTDGSSGLNEE) are enriched in polar residues. Over residues 470 to 480 (SPEDSRSRKTP) the composition is skewed to basic and acidic residues.

Belongs to the D-isomer specific 2-hydroxyacid dehydrogenase family. Plant AN subfamily. Homodimer. Interacts with KCBP and SUB (via intra-cellular domain); AN is not required for the correct subcellular localization and recycling of SUB. Binds to SOKs proteins polymers (e.g. SOK1, SOK2, SOK3 and SOK4). Interacts with IPGA1 on microtubule upon mechanical stress to regulate microtubule organization. NAD(+) is required as a cofactor. As to expression, expressed in cotyledons, leaves, roots, stems and floral buds.

The protein resides in the cytoplasm. It localises to the golgi apparatus. Its subcellular location is the trans-Golgi network. The protein localises to the cytoskeleton. Its function is as follows. Involved in controlling the equilibrium between tubular and stacked structures in the Golgi complex. Required for cortical microtubules (MTs) arrangement that confers cell shape. Cooperatively with IPGA1, negatively regulates cortical microtubules (CMTs) organization in response to mechanical stress and modulates pavement cells morphogenesis leading to puzzle shape, probably in an AAA1/KTN1-dependent manner. Regulates the width of leaves by controlling the polar elongation of leaf cells. Involved in the regulation of trichome branching. Seems to not be able to regulate gene transcription. Regulates epidermal cell divisions and elongation in a non-cell-autonomous manner (regulated by subepidermal cells), but regulates epidermal cell polarity, shape, trichome branching and elongation in a cell-autonomous manner. Negatively regulates growth in the petiole elongation. Prevents lipid peroxidation as a result of abiotic stress response. Is involved in the SUB-dependent signaling mechanism and may act in a membrane trafficking event around the trans-Golgi network. This is C-terminal binding protein AN from Arabidopsis thaliana (Mouse-ear cress).